A 253-amino-acid chain; its full sequence is Glutamate racemase (253 aa).

Substrate is bound by residues 7 to 8 and 39 to 40; these read DS and YG. The Proton donor/acceptor role is filled by Cys-70. 71–72 serves as a coordination point for substrate; the sequence is NS. Cys-179 serves as the catalytic Proton donor/acceptor. 180 to 181 contacts substrate; sequence TH.

This sequence belongs to the aspartate/glutamate racemases family.

It catalyses the reaction L-glutamate = D-glutamate. It functions in the pathway cell wall biogenesis; peptidoglycan biosynthesis. Its function is as follows. Provides the (R)-glutamate required for cell wall biosynthesis. The sequence is that of Glutamate racemase from Nitratiruptor sp. (strain SB155-2).